We begin with the raw amino-acid sequence, 367 residues long: Peptide chain release factor 2 (367 aa).

N5-methylglutamine is present on Gln-250.

Belongs to the prokaryotic/mitochondrial release factor family. Post-translationally, methylated by PrmC. Methylation increases the termination efficiency of RF2.

The protein resides in the cytoplasm. In terms of biological role, peptide chain release factor 2 directs the termination of translation in response to the peptide chain termination codons UGA and UAA. This Chloroflexus aggregans (strain MD-66 / DSM 9485) protein is Peptide chain release factor 2.